A 103-amino-acid polypeptide reads, in one-letter code: Entry-fusion complex protein OPG086 (103 aa).

The chain crosses the membrane as a helical; Signal-anchor span at residues 1-21 (MTLFLVIFFILFLLLCYFFSF). Residues 22–103 (KRTNKMEIGI…KLVPTLLLSK (82 aa)) lie on the Virion surface side of the membrane.

The protein belongs to the orthopoxvirus OPG086 family. Interacts with OPG099/L5. Component of the entry fusion complex (EFC) composed of OPG053, OPG076, OPG086, OPG094, OPG095, OPG099, OPG107, OPG143, OPG104, OPG147 and OPG155. Except for OPG095 and OPG053, each of the EFC proteins is required for assembly or stability of the complex. Unglycosylated because produced in viral factories instead of the classic ER -Golgi route.

It localises to the virion membrane. Its function is as follows. Component of the entry fusion complex (EFC), which consists of 11 proteins. During cell infection, this complex mediates entry of the virion core into the host cytoplasm by a two-step mechanism consisting of lipid mixing of the viral and cellular membranes and subsequent pore formation. This is Entry-fusion complex protein OPG086 (OPG086) from Vertebrata (FPV).